We begin with the raw amino-acid sequence, 560 residues long: Nibrin homolog (560 aa).

The FHA domain maps to 25 to 87; the sequence is YKVGRKDCDV…YGTFFNKVQG (63 aa). The BRCT domain occupies 115-190; sequence TFRLSFVPIV…KQIVLGDWFK (76 aa).

This sequence belongs to the Nibrin family. As to quaternary structure, component of the MRN complex composed of two heterodimers RAD50 and MRE11 associated with a single NBS1. In terms of tissue distribution, mostly expressed in the shoot apex and young flower, but also in young leaves, root tips and stamen, tissues where frequent cell division or meiosis may occur.

The protein resides in the nucleus. Its subcellular location is the chromosome. Functionally, component of the MRN complex, which plays a central role in double-strand break (DSB) repair, DNA recombination, maintenance of telomere integrity and meiosis. The MRN complex is involved in the repair of DNA double-strand breaks (DSBs) via homologous recombination (HR), an error-free mechanism which primarily occurs during S and G2 phases. The complex (1) mediates the end resection of damaged DNA, which generates proper single-stranded DNA, a key initial steps in HR, and is (2) required for the recruitment of other repair factors and efficient activation of ATM and ATR upon DNA damage. The MRN complex possesses single-strand endonuclease activity and double-strand-specific 3'-5' exonuclease activity, which are provided by MRE11, to initiate end resection, which is required for single-strand invasion and recombination. Within the MRN complex, NBS1 acts as a protein-protein adapter, which specifically recognizes and binds phosphorylated proteins, promoting their recruitment to DNA damage sites. Recruits MRE11 and RAD50 components of the MRN complex to DSBs in response to DNA damage. The sequence is that of Nibrin homolog from Oryza sativa subsp. japonica (Rice).